The following is a 368-amino-acid chain: tRNA-specific 2-thiouridylase MnmA (368 aa).

ATP is bound by residues 24 to 31 (AMSGGVDS) and L50. C117 serves as the catalytic Nucleophile. Cysteines 117 and 213 form a disulfide. An ATP-binding site is contributed by G141. Residues 163-165 (KDQ) are interaction with tRNA. C213 (cysteine persulfide intermediate) is an active-site residue.

The protein belongs to the MnmA/TRMU family.

Its subcellular location is the cytoplasm. It catalyses the reaction S-sulfanyl-L-cysteinyl-[protein] + uridine(34) in tRNA + AH2 + ATP = 2-thiouridine(34) in tRNA + L-cysteinyl-[protein] + A + AMP + diphosphate + H(+). Catalyzes the 2-thiolation of uridine at the wobble position (U34) of tRNA, leading to the formation of s(2)U34. The chain is tRNA-specific 2-thiouridylase MnmA from Wolbachia pipientis subsp. Culex pipiens (strain wPip).